The sequence spans 681 residues: Type VI secretion system spike protein VgrG1 (681 aa).

The segment at 621–640 is disordered; it reads NSGGSPSSGSGWGGKSPVDP.

The protein belongs to the VgrG protein family.

Its subcellular location is the secreted. It catalyses the reaction L-arginyl-[protein] + NAD(+) = N(omega)-(ADP-D-ribosyl)-L-arginyl-[protein] + nicotinamide + H(+). Functionally, part of the type VI secretion system specialized secretion system, which delivers several virulence factors in both prokaryotic and eukaryotic cells during infection. Acts directly as an secreted effector with an actin ADP-ribosyltransferase activity that disrupts the host actin cytoskeleton, leading to a decrease in host cell viability and an increase in apoptosis. The chain is Type VI secretion system spike protein VgrG1 (vgrG1) from Aeromonas hydrophila.